We begin with the raw amino-acid sequence, 211 residues long: tRNA (guanine-N(7)-)-methyltransferase (211 aa).

S-adenosyl-L-methionine contacts are provided by Glu43, Glu68, Asn95, and Asp117. The active site involves Asp117. Substrate contacts are provided by residues Lys121, Asp153, and 190–193 (TEYE).

The protein belongs to the class I-like SAM-binding methyltransferase superfamily. TrmB family.

It carries out the reaction guanosine(46) in tRNA + S-adenosyl-L-methionine = N(7)-methylguanosine(46) in tRNA + S-adenosyl-L-homocysteine. It participates in tRNA modification; N(7)-methylguanine-tRNA biosynthesis. In terms of biological role, catalyzes the formation of N(7)-methylguanine at position 46 (m7G46) in tRNA. The polypeptide is tRNA (guanine-N(7)-)-methyltransferase (Alkaliphilus oremlandii (strain OhILAs) (Clostridium oremlandii (strain OhILAs))).